The sequence spans 362 residues: UDP-N-acetylglucosamine--N-acetylmuramyl-(pentapeptide) pyrophosphoryl-undecaprenol N-acetylglucosamine transferase (362 aa).

UDP-N-acetyl-alpha-D-glucosamine-binding positions include 10 to 12, Asn124, Arg161, Ser195, and Gln291; that span reads TAG.

The protein belongs to the glycosyltransferase 28 family. MurG subfamily.

The protein resides in the cell membrane. The enzyme catalyses di-trans,octa-cis-undecaprenyl diphospho-N-acetyl-alpha-D-muramoyl-L-alanyl-D-glutamyl-meso-2,6-diaminopimeloyl-D-alanyl-D-alanine + UDP-N-acetyl-alpha-D-glucosamine = di-trans,octa-cis-undecaprenyl diphospho-[N-acetyl-alpha-D-glucosaminyl-(1-&gt;4)]-N-acetyl-alpha-D-muramoyl-L-alanyl-D-glutamyl-meso-2,6-diaminopimeloyl-D-alanyl-D-alanine + UDP + H(+). It functions in the pathway cell wall biogenesis; peptidoglycan biosynthesis. Cell wall formation. Catalyzes the transfer of a GlcNAc subunit on undecaprenyl-pyrophosphoryl-MurNAc-pentapeptide (lipid intermediate I) to form undecaprenyl-pyrophosphoryl-MurNAc-(pentapeptide)GlcNAc (lipid intermediate II). This is UDP-N-acetylglucosamine--N-acetylmuramyl-(pentapeptide) pyrophosphoryl-undecaprenol N-acetylglucosamine transferase from Streptomyces collinus.